The following is an 85-amino-acid chain: Large ribosomal subunit protein bL31B (85 aa).

This sequence belongs to the bacterial ribosomal protein bL31 family. Type B subfamily. Part of the 50S ribosomal subunit.

This is Large ribosomal subunit protein bL31B from Staphylococcus epidermidis (strain ATCC 35984 / DSM 28319 / BCRC 17069 / CCUG 31568 / BM 3577 / RP62A).